The primary structure comprises 124 residues: Ribonuclease pancreatic (124 aa).

A compositionally biased stretch (basic and acidic residues) spans 1–13 (KETAAAKFERQHM). The segment at 1–25 (KETAAAKFERQHMDSSTSSASSSNY) is disordered. 2 residues coordinate substrate: Lys-7 and Arg-10. His-12 acts as the Proton acceptor in catalysis. Disulfide bonds link Cys-26/Cys-84, Cys-40/Cys-95, Cys-58/Cys-110, and Cys-65/Cys-72. Substrate contacts are provided by residues 41-45 (KPVNT), Lys-66, and Arg-85. Catalysis depends on His-119, which acts as the Proton donor.

The protein belongs to the pancreatic ribonuclease family. Monomer. Interacts with and forms tight 1:1 complexes with RNH1. Dimerization of two such complexes may occur. Interaction with RNH1 inhibits this protein. In terms of tissue distribution, pancreas.

It is found in the secreted. The enzyme catalyses an [RNA] containing cytidine + H2O = an [RNA]-3'-cytidine-3'-phosphate + a 5'-hydroxy-ribonucleotide-3'-[RNA].. It catalyses the reaction an [RNA] containing uridine + H2O = an [RNA]-3'-uridine-3'-phosphate + a 5'-hydroxy-ribonucleotide-3'-[RNA].. Its function is as follows. Endonuclease that catalyzes the cleavage of RNA on the 3' side of pyrimidine nucleotides. Acts on single-stranded and double-stranded RNA. This chain is Ribonuclease pancreatic (RNASE1), found in Tragelaphus oryx (Eland).